The following is a 483-amino-acid chain: BTB/POZ domain and ankyrin repeat-containing protein COCH (483 aa).

In terms of domain architecture, BTB spans 25 to 105 (SDVVFSVEGR…LYSGQVSIVP (81 aa)). Residues 111-125 (RPNCGDRGCWHTHCT) form a C2HC NPR-type zinc finger. Zn(2+) is bound by residues Cys-114, Cys-119, His-121, and Cys-124. 4 ANK repeats span residues 249 to 278 (QKIR…LNLD), 279 to 308 (EALA…DVNF), 313 to 342 (TGKT…DPNV), and 346 to 380 (DGVT…KLRL). 2 disordered regions span residues 395 to 435 (EEGN…NSNM) and 450 to 483 (MSTS…SHDY). Positions 398-414 (NNNNNANNNNTGSSATN) are enriched in low complexity. Positions 456–465 (DSGDDDHNSN) are enriched in basic and acidic residues.

This sequence belongs to the plant 'ANKYRIN-BTB/POZ' family. 'NOOT-BOP-COCH-like' (NBCL) subfamily. In terms of assembly, homodimer.

The protein resides in the nucleus. It is found in the cytoplasm. It localises to the cell membrane. The protein operates within protein modification; protein ubiquitination. Functionally, may act as a substrate-specific adapter of an E3 ubiquitin-protein ligase complex (CUL3-RBX1-BTB) which mediates the ubiquitination and subsequent proteasomal degradation of target proteins. Transcriptional co-regulator involved in the promotion of leaf and floral meristem fate and determinacy. Promotes normal stipule growth and development. Required for the abscission of senescent organs, probably by regulating the cell wall disorganization in abscission zones (AZs, e.g. pulvini at the base of leaves). Down-regulates UNI expression in primordia of leaves and secondary inflorescences, and thereby controls their sizes and/or structures. Involved in the coordination of the symbiotic nodule developmental program. Promotes the formation of root nodules by interacting directly with APP1 to modulate the expression of the nuclear transcription factor Y subunit (NF-YA1), a key nodulin. Necessary for the robust maintenance of nodule identity throughout the nodule developmental program. The sequence is that of BTB/POZ domain and ankyrin repeat-containing protein COCH from Pisum sativum (Garden pea).